The sequence spans 132 residues: Phosphoribosyl-AMP cyclohydrolase (132 aa).

Residue Asp-78 coordinates Mg(2+). Cys-79 contributes to the Zn(2+) binding site. The Mg(2+) site is built by Asp-80 and Asp-82. 2 residues coordinate Zn(2+): Cys-96 and Cys-103.

Belongs to the PRA-CH family. Homodimer. Mg(2+) serves as cofactor. The cofactor is Zn(2+).

The protein localises to the cytoplasm. The catalysed reaction is 1-(5-phospho-beta-D-ribosyl)-5'-AMP + H2O = 1-(5-phospho-beta-D-ribosyl)-5-[(5-phospho-beta-D-ribosylamino)methylideneamino]imidazole-4-carboxamide. It functions in the pathway amino-acid biosynthesis; L-histidine biosynthesis; L-histidine from 5-phospho-alpha-D-ribose 1-diphosphate: step 3/9. Its function is as follows. Catalyzes the hydrolysis of the adenine ring of phosphoribosyl-AMP. This is Phosphoribosyl-AMP cyclohydrolase from Nitrosococcus oceani (strain ATCC 19707 / BCRC 17464 / JCM 30415 / NCIMB 11848 / C-107).